The primary structure comprises 617 residues: Dihydroxy-acid dehydratase (617 aa).

D81 is a Mg(2+) binding site. Residue C122 coordinates [2Fe-2S] cluster. The Mg(2+) site is built by D123 and K124. Residue K124 is modified to N6-carboxylysine. C195 is a [2Fe-2S] cluster binding site. E491 lines the Mg(2+) pocket. Catalysis depends on S517, which acts as the Proton acceptor.

It belongs to the IlvD/Edd family. As to quaternary structure, homodimer. The cofactor is [2Fe-2S] cluster. Mg(2+) is required as a cofactor.

The enzyme catalyses (2R)-2,3-dihydroxy-3-methylbutanoate = 3-methyl-2-oxobutanoate + H2O. It catalyses the reaction (2R,3R)-2,3-dihydroxy-3-methylpentanoate = (S)-3-methyl-2-oxopentanoate + H2O. Its pathway is amino-acid biosynthesis; L-isoleucine biosynthesis; L-isoleucine from 2-oxobutanoate: step 3/4. It participates in amino-acid biosynthesis; L-valine biosynthesis; L-valine from pyruvate: step 3/4. Functions in the biosynthesis of branched-chain amino acids. Catalyzes the dehydration of (2R,3R)-2,3-dihydroxy-3-methylpentanoate (2,3-dihydroxy-3-methylvalerate) into 2-oxo-3-methylpentanoate (2-oxo-3-methylvalerate) and of (2R)-2,3-dihydroxy-3-methylbutanoate (2,3-dihydroxyisovalerate) into 2-oxo-3-methylbutanoate (2-oxoisovalerate), the penultimate precursor to L-isoleucine and L-valine, respectively. This is Dihydroxy-acid dehydratase from Buchnera aphidicola subsp. Schizaphis graminum (strain Sg).